Consider the following 603-residue polypeptide: Sesquiterpene synthase Cad (603 aa).

Polar residues predominate over residues 1–13 (MAEVGLSQNSYAS). The tract at residues 1 to 23 (MAEVGLSQNSYASANHDKKSEQQ) is disordered. Mg(2+) is bound by residues aspartate 357, aspartate 361, aspartate 498, and glutamate 506. Residues 357 to 361 (DDIFD) carry the DDXXD motif motif.

It belongs to the terpene synthase family. Tpsa subfamily. Mg(2+) serves as cofactor. It depends on Mn(2+) as a cofactor. In terms of tissue distribution, mostly expressed in leaves and, to a lower extent, in stems and xylem.

The catalysed reaction is (2E,6E)-farnesyl diphosphate = beta-cadinene + diphosphate. The protein operates within secondary metabolite biosynthesis; terpenoid biosynthesis. Its function is as follows. Sesquiterpene synthase involved in the biosynthesis of volatile compounds. Mediates the conversion of (2E,6E)-farnesyl diphosphate (FPP) into beta-cadinene. Not active with geranyl diphosphate (GPP) and geranylgeranyl diphosphate (GGPP) as substrates. In Chamaecyparis formosensis (Formosan cypress), this protein is Sesquiterpene synthase Cad.